A 213-amino-acid polypeptide reads, in one-letter code: MKKTLLGSLILLAFAGNVQADINTETSGKVTFFGKVVENTCKVKTEHKNLSVVLNDVGKNSLSTKVNTAMPTPFTITLQNCDPTTANGTANKANKVGLYFYSWKNVDKENNFTLKNEQTTADYATNVNIQLMESNGTKAISVVGKETEDFMHTNNNGVALNQTHPNNAHISGSTQLTTGTNELPLHFIAQYYATNKATAGKVQSSVDFQIAYE.

The signal sequence occupies residues 1 to 20 (MKKTLLGSLILLAFAGNVQA). Residues cysteine 41 and cysteine 81 are joined by a disulfide bond.

This sequence belongs to the fimbrial protein family.

Its subcellular location is the fimbrium. Its function is as follows. Mediates adherence to oropharyngeal epithelial cells. Helps the airway colonization process. The sequence is that of Major fimbrial subunit (hifA) from Haemophilus influenzae.